Consider the following 202-residue polypeptide: Large ribosomal subunit protein uL5 (202 aa).

Over residues 1-17 the composition is skewed to low complexity; that stretch reads MSAKAATKNATKVAVKA. The tract at residues 1–30 is disordered; it reads MSAKAATKNATKVAVKAPEATTPVETKKSK.

It belongs to the universal ribosomal protein uL5 family. In terms of assembly, component of the large ribosomal subunit.

The protein localises to the nucleus. It localises to the cytoplasm. In terms of biological role, component of the ribosome, a large ribonucleoprotein complex responsible for the synthesis of proteins in the cell. The small ribosomal subunit (SSU) binds messenger RNAs (mRNAs) and translates the encoded message by selecting cognate aminoacyl-transfer RNA (tRNA) molecules. The large subunit (LSU) contains the ribosomal catalytic site termed the peptidyl transferase center (PTC), which catalyzes the formation of peptide bonds, thereby polymerizing the amino acids delivered by tRNAs into a polypeptide chain. The nascent polypeptides leave the ribosome through a tunnel in the LSU and interact with protein factors that function in enzymatic processing, targeting, and the membrane insertion of nascent chains at the exit of the ribosomal tunnel. This Dictyostelium discoideum (Social amoeba) protein is Large ribosomal subunit protein uL5 (rpl11).